A 140-amino-acid polypeptide reads, in one-letter code: uncharacterized protein (140 aa).

The span at 1 to 19 (MGLCGSKTQPMPSQTTTVA) shows a compositional bias: polar residues. The segment at 1-140 (MGLCGSKTQP…ERERENMIYD (140 aa)) is disordered. Gly2 carries the N-myristoyl glycine lipid modification. A lipid anchor (S-palmitoyl cysteine) is attached at Cys4. Positions 27–40 (INRDTVKSKQELRH) are enriched in basic and acidic residues. Residues 41–51 (KEKKDKKKKTQ) show a composition bias toward basic residues. The span at 73 to 140 (DPSKNKVSPK…ERERENMIYD (68 aa)) shows a compositional bias: basic and acidic residues.

To S.pombe new13. Myristoylated. In terms of processing, the N-myristoylated protein is further palmitoylated by ERF2, PFA4 and slightly by PFA5, but not by PFA3.

The protein resides in the cytoplasm. The protein localises to the cytosol. This is an uncharacterized protein from Saccharomyces cerevisiae (strain ATCC 204508 / S288c) (Baker's yeast).